Consider the following 251-residue polypeptide: Geranylgeranylglyceryl phosphate synthase (251 aa).

Positions 25 and 54 each coordinate Mg(2+). Residues Tyr-173–Gly-179, Gly-204–Gly-205, and Gly-226–Thr-227 contribute to the sn-glycerol 1-phosphate site.

Belongs to the GGGP/HepGP synthase family. Group II subfamily. Mg(2+) is required as a cofactor.

It localises to the cytoplasm. The enzyme catalyses sn-glycerol 1-phosphate + (2E,6E,10E)-geranylgeranyl diphosphate = sn-3-O-(geranylgeranyl)glycerol 1-phosphate + diphosphate. It functions in the pathway membrane lipid metabolism; glycerophospholipid metabolism. Its function is as follows. Prenyltransferase that catalyzes the transfer of the geranylgeranyl moiety of geranylgeranyl diphosphate (GGPP) to the C3 hydroxyl of sn-glycerol-1-phosphate (G1P). This reaction is the first ether-bond-formation step in the biosynthesis of archaeal membrane lipids. The chain is Geranylgeranylglyceryl phosphate synthase from Pyrococcus furiosus (strain ATCC 43587 / DSM 3638 / JCM 8422 / Vc1).